Reading from the N-terminus, the 280-residue chain is Ribosomal RNA small subunit methyltransferase A (280 aa).

The S-adenosyl-L-methionine site is built by asparagine 27, leucine 29, glycine 54, glutamate 76, aspartate 102, and asparagine 122.

Belongs to the class I-like SAM-binding methyltransferase superfamily. rRNA adenine N(6)-methyltransferase family. RsmA subfamily.

The protein localises to the cytoplasm. The enzyme catalyses adenosine(1518)/adenosine(1519) in 16S rRNA + 4 S-adenosyl-L-methionine = N(6)-dimethyladenosine(1518)/N(6)-dimethyladenosine(1519) in 16S rRNA + 4 S-adenosyl-L-homocysteine + 4 H(+). Specifically dimethylates two adjacent adenosines (A1518 and A1519) in the loop of a conserved hairpin near the 3'-end of 16S rRNA in the 30S particle. May play a critical role in biogenesis of 30S subunits. This Oleidesulfovibrio alaskensis (strain ATCC BAA-1058 / DSM 17464 / G20) (Desulfovibrio alaskensis) protein is Ribosomal RNA small subunit methyltransferase A.